A 327-amino-acid chain; its full sequence is Cobalamin biosynthesis protein CobD (327 aa).

A run of 4 helical transmembrane segments spans residues 60 to 80 (GMWLTIGLVMACVVLGLVLEL), 82 to 102 (LPFAGTAGAVAEILIVTVLLA), 159 to 179 (DGIVAPAFWFLVGGLPGLFAY), and 304 to 324 (LFWSTMSLMTGLVIAASLIGL).

This sequence belongs to the CobD/CbiB family.

The protein localises to the cell membrane. It participates in cofactor biosynthesis; adenosylcobalamin biosynthesis. Converts cobyric acid to cobinamide by the addition of aminopropanol on the F carboxylic group. The chain is Cobalamin biosynthesis protein CobD from Brucella anthropi (strain ATCC 49188 / DSM 6882 / CCUG 24695 / JCM 21032 / LMG 3331 / NBRC 15819 / NCTC 12168 / Alc 37) (Ochrobactrum anthropi).